Reading from the N-terminus, the 353-residue chain is Photosystem II protein D1 (353 aa).

Thr2 carries the post-translational modification N-acetylthreonine. Thr2 is modified (phosphothreonine). A run of 3 helical transmembrane segments spans residues 29–46, 118–133, and 142–156; these read YIGW…TATS, HFFL…EWEL, and WIAV…AATA. Chlorophyll a is bound at residue His118. Tyr126 serves as a coordination point for pheophytin a. [CaMn4O5] cluster is bound by residues Asp170 and Glu189. A helical transmembrane segment spans residues 197-218; the sequence is FHMLGVAGVFGGSLFSAMHGSL. Position 198 (His198) interacts with chlorophyll a. Residues His215 and 264 to 265 each bind a quinone; that span reads SF. His215 is a Fe cation binding site. His272 contacts Fe cation. The chain crosses the membrane as a helical span at residues 274–288; the sequence is FLAAWPVVGIWFTAL. Residues His332, Glu333, Asp342, and Ala344 each contribute to the [CaMn4O5] cluster site. Residues 345 to 353 constitute a propeptide that is removed on maturation; that stretch reads SVEAPSVNA.

This sequence belongs to the reaction center PufL/M/PsbA/D family. PSII is composed of 1 copy each of membrane proteins PsbA, PsbB, PsbC, PsbD, PsbE, PsbF, PsbH, PsbI, PsbJ, PsbK, PsbL, PsbM, PsbT, PsbX, PsbY, PsbZ, Psb30/Ycf12, at least 3 peripheral proteins of the oxygen-evolving complex and a large number of cofactors. It forms dimeric complexes. It depends on The D1/D2 heterodimer binds P680, chlorophylls that are the primary electron donor of PSII, and subsequent electron acceptors. It shares a non-heme iron and each subunit binds pheophytin, quinone, additional chlorophylls, carotenoids and lipids. D1 provides most of the ligands for the Mn4-Ca-O5 cluster of the oxygen-evolving complex (OEC). There is also a Cl(-1) ion associated with D1 and D2, which is required for oxygen evolution. The PSII complex binds additional chlorophylls, carotenoids and specific lipids. as a cofactor. Post-translationally, the 9 C-terminal residues are removed, probably by CTPA (AC O04073); processing is essential to allow assembly of the oxygen-evolving complex and thus photosynthetic growth. Tyr-161 forms a radical intermediate that is referred to as redox-active TyrZ, YZ or Y-Z.

The protein localises to the plastid. Its subcellular location is the chloroplast thylakoid membrane. The enzyme catalyses 2 a plastoquinone + 4 hnu + 2 H2O = 2 a plastoquinol + O2. Its function is as follows. Photosystem II (PSII) is a light-driven water:plastoquinone oxidoreductase that uses light energy to abstract electrons from H(2)O, generating O(2) and a proton gradient subsequently used for ATP formation. It consists of a core antenna complex that captures photons, and an electron transfer chain that converts photonic excitation into a charge separation. The D1/D2 (PsbA/PsbD) reaction center heterodimer binds P680, the primary electron donor of PSII as well as several subsequent electron acceptors. The polypeptide is Photosystem II protein D1 (Tetradesmus obliquus (Green alga)).